The primary structure comprises 329 residues: Pantothenate kinase (329 aa).

The disordered stretch occupies residues 1-21 (MISPVPSIPRSAHRQRPEATP). 107–114 (GSVAVGKS) contacts ATP.

Belongs to the prokaryotic pantothenate kinase family.

The protein localises to the cytoplasm. The enzyme catalyses (R)-pantothenate + ATP = (R)-4'-phosphopantothenate + ADP + H(+). The protein operates within cofactor biosynthesis; coenzyme A biosynthesis; CoA from (R)-pantothenate: step 1/5. This Streptomyces coelicolor (strain ATCC BAA-471 / A3(2) / M145) protein is Pantothenate kinase (coaA).